Reading from the N-terminus, the 340-residue chain is Probable allantoicase (340 aa).

The protein belongs to the allantoicase family.

It catalyses the reaction allantoate + H2O = (S)-ureidoglycolate + urea. It participates in nitrogen metabolism; (S)-allantoin degradation; (S)-ureidoglycolate from allantoate (aminidohydrolase route): step 1/1. This is Probable allantoicase from Rhizobium meliloti (strain 1021) (Ensifer meliloti).